A 179-amino-acid polypeptide reads, in one-letter code: Transmembrane protein 196 (179 aa).

4 consecutive transmembrane segments (helical) span residues 11–31 (LLVLSVLEIGLGVSSVAVGAV), 44–61 (LGDSSPFLLCGICGILCA), 67–87 (LVMILFSACCICGLIGGILNF), and 100–120 (LYPLHLASMSLACIGIGGCTL).

Its subcellular location is the cytoplasm. The protein resides in the membrane. Functionally, acts as a tumor suppressor in lung cancer. Inhibits tumor cell growth by inhibiting cell proliferation and migration and promoting cell apoptosis. Inhibits metastasis of lung cancer by suppressing beta-catenin expression in the Wnt/beta-catenin signaling pathway. The chain is Transmembrane protein 196 (TMEM196) from Pongo abelii (Sumatran orangutan).